A 295-amino-acid polypeptide reads, in one-letter code: Acetylglutamate kinase (295 aa).

Residues 66–67, arginine 88, and asparagine 193 contribute to the substrate site; that span reads GG.

It belongs to the acetylglutamate kinase family. ArgB subfamily.

The protein localises to the cytoplasm. It catalyses the reaction N-acetyl-L-glutamate + ATP = N-acetyl-L-glutamyl 5-phosphate + ADP. It functions in the pathway amino-acid biosynthesis; L-arginine biosynthesis; N(2)-acetyl-L-ornithine from L-glutamate: step 2/4. In terms of biological role, catalyzes the ATP-dependent phosphorylation of N-acetyl-L-glutamate. In Rhizobium johnstonii (strain DSM 114642 / LMG 32736 / 3841) (Rhizobium leguminosarum bv. viciae), this protein is Acetylglutamate kinase.